The primary structure comprises 160 residues: S-ribosylhomocysteine lyase (160 aa).

Histidine 57, histidine 61, and cysteine 127 together coordinate Fe cation.

It belongs to the LuxS family. As to quaternary structure, homodimer. It depends on Fe cation as a cofactor.

It catalyses the reaction S-(5-deoxy-D-ribos-5-yl)-L-homocysteine = (S)-4,5-dihydroxypentane-2,3-dione + L-homocysteine. In terms of biological role, involved in the synthesis of autoinducer 2 (AI-2) which is secreted by bacteria and is used to communicate both the cell density and the metabolic potential of the environment. The regulation of gene expression in response to changes in cell density is called quorum sensing. Catalyzes the transformation of S-ribosylhomocysteine (RHC) to homocysteine (HC) and 4,5-dihydroxy-2,3-pentadione (DPD). In Streptococcus gordonii (strain Challis / ATCC 35105 / BCRC 15272 / CH1 / DL1 / V288), this protein is S-ribosylhomocysteine lyase.